We begin with the raw amino-acid sequence, 283 residues long: Diaminopimelate epimerase (283 aa).

Substrate contacts are provided by asparagine 13, glutamine 45, and asparagine 65. Residue cysteine 74 is the Proton donor of the active site. Residues 75–76 (GN), asparagine 156, asparagine 190, and 208–209 (ER) contribute to the substrate site. Cysteine 217 serves as the catalytic Proton acceptor. 218–219 (GS) is a substrate binding site.

This sequence belongs to the diaminopimelate epimerase family. As to quaternary structure, homodimer.

It is found in the cytoplasm. It carries out the reaction (2S,6S)-2,6-diaminopimelate = meso-2,6-diaminopimelate. Its pathway is amino-acid biosynthesis; L-lysine biosynthesis via DAP pathway; DL-2,6-diaminopimelate from LL-2,6-diaminopimelate: step 1/1. Functionally, catalyzes the stereoinversion of LL-2,6-diaminopimelate (L,L-DAP) to meso-diaminopimelate (meso-DAP), a precursor of L-lysine and an essential component of the bacterial peptidoglycan. The polypeptide is Diaminopimelate epimerase (Bartonella quintana (strain Toulouse) (Rochalimaea quintana)).